A 139-amino-acid polypeptide reads, in one-letter code: Heavy metal-associated isoprenylated plant protein 13 (139 aa).

Positions 3–70 (PMKAVLQLSI…LCNTELVSVE (68 aa)) constitute an HMA domain. The disordered stretch occupies residues 70–94 (EVVKPPEKKPEPEKPAPPKPAPAPA). A compositionally biased stretch (basic and acidic residues) spans 73-85 (KPPEKKPEPEKPA). A Cysteine methyl ester modification is found at cysteine 136. Cysteine 136 is lipidated: S-farnesyl cysteine. Residues 137-139 (VIM) constitute a propeptide, removed in mature form.

It belongs to the HIPP family.

In terms of biological role, probable heavy-metal-binding protein. In Arabidopsis thaliana (Mouse-ear cress), this protein is Heavy metal-associated isoprenylated plant protein 13.